The chain runs to 1130 residues: MLEICLKLVGCKSKKGLSSSSSCYLEEALQRPVASDFEPQGLSEAARWNSKENLLAGPSENDPNLFVALYDFVASGDNTLSITKGEKLRVLGYNHNGEWCEAQTKNGQGWVPSNYITPVNSLEKHSWYHGPVSRNAAEYLLSSGINGSFLVRESESSPGQRSISLRYEGRVYHYRINTASDGKLYVSSESRFNTLAELVHHHSTVADGLITTLHYPAPKRNKPTVYGVSPNYDKWEMERTDITMKHKLGGGQYGEVYEGVWKKYSLTVAVKTLKEDTMEVEEFLKEAAVMKEIKHPNLVQLLGVCTREPPFYIITEFMTYGNLLDYLRECNRQEVNAVVLLYMATQISSAMEYLEKKNFIHRDLAARNCLVGENHLVKVADFGLSRLMTGDTYTAHAGAKFPIKWTAPESLAYNKFSIKSDVWAFGVLLWEIATYGMSPYPGIDLSQVYELLEKDYRMERPEGCPEKVYELMRACWQWNPSDRPSFAEIHQAFETMFQESSISDEVEKELGKQGVRGAVSTLLQAPELPTKTRTSRRAAEHRDTTDVPEMPHSKGQGESDPLDHEPAVSPLLPRKERGPPEGGLNEDERLLPKDKKTNLFSALIKKKKKTAPTPPKRSSSFREMDGQPERRGAGEEEGRDISNGALAFTPLDTADPAKSPKPSNGAGVPNGALRESGGSGFRSPHLWKKSSTLTSSRLATGEEEGGGSSSKRFLRSCSASCVPHGAKDTEWRSVTLPRDLQSTGRQFDSSTFGGHKSEKPALPRKRAGENRSDQVTRGTVTPPPRLVKKNEEAADEVFKDIMESSPGSSPPNLTPKPLRRQVTVAPASGLPHKEEAGKGSALGTPAAAEPVTPTSKAGSGAPGGTSKGPAEESRVRRHKHSSESPGRDKGKLSRLKPAPPPPPAASAGKAGGKPSQSPSQEAAGEAVLGAKTKATSLVDAVNSDAAKPSQPGEGLKKPVLPATPKPQSAKPSGTPISPAPVPSTLPSASSALAGDQPSSTAFIPLISTRVSLRKTRQPPERIASGAITKGVVLDSTEALCLAISRNSEQMASHSAVLEAGKNLYTFCVSYVDSIQQMRNKFAFREAINKLENNLRELQICPATAGSGPAATQDFSKLLSSVKEISDIVQR.

Positions 1–60 (MLEICLKLVGCKSKKGLSSSSSCYLEEALQRPVASDFEPQGLSEAARWNSKENLLAGPSE) are CAP. A lipid anchor (N-myristoyl glycine) is attached at leucine 2. A Phosphoserine modification is found at serine 50. In terms of domain architecture, SH3 spans 61–121 (NDPNLFVALY…PSNYITPVNS (61 aa)). Residue tyrosine 70 is modified to Phosphotyrosine; by autocatalysis. Residues tyrosine 115, tyrosine 128, tyrosine 139, tyrosine 172, tyrosine 185, and tyrosine 215 each carry the phosphotyrosine modification. Residues 127 to 217 (WYHGPVSRNA…GLITTLHYPA (91 aa)) form the SH2 domain. At tyrosine 226 the chain carries Phosphotyrosine; by autocatalysis. Position 229 is a phosphoserine (serine 229). The region spanning 242–493 (ITMKHKLGGG…PSFAEIHQAF (252 aa)) is the Protein kinase domain. 248–256 (LGGGQYGEV) is a binding site for ATP. Phosphotyrosine is present on residues tyrosine 253 and tyrosine 257. Residues lysine 271 and 316–322 (EFMTYGN) each bind ATP. Aspartate 363 acts as the Proton acceptor in catalysis. A Kinase activation loop motif is present at residues 381–405 (DFGLSRLMTGDTYTAHAGAKFPIKW). Tyrosine 393 is subject to Phosphotyrosine; by autocatalysis and SRC-type Tyr-kinases. Position 413 is a phosphotyrosine (tyrosine 413). 3 positions are modified to phosphoserine: serine 446, serine 559, and serine 569. Residues 518 to 996 (AVSTLLQAPE…SASSALAGDQ (479 aa)) are disordered. The segment covering 537–566 (RAAEHRDTTDVPEMPHSKGQGESDPLDHEP) has biased composition (basic and acidic residues). A compositionally biased stretch (basic and acidic residues) spans 586–597 (EDERLLPKDKKT). Residues 605-609 (KKKKK) carry the Nuclear localization signal 1 motif. Residues serine 618 and serine 619 each carry the phosphoserine; by PAK2 modification. A phosphoserine mark is found at serine 620, serine 659, and serine 683. The span at 620 to 640 (SFREMDGQPERRGAGEEEGRD) shows a compositional bias: basic and acidic residues. Residues 689–698 (KSSTLTSSRL) show a composition bias toward polar residues. Residues 709-715 (SSKRFLR) carry the Nuclear localization signal 2 motif. Lysine 711 is subject to N6-acetyllysine; by EP300. The residue at position 718 (serine 718) is a Phosphoserine. Residues threonine 735 and threonine 751 each carry the phosphothreonine modification. Residues 740–752 (LQSTGRQFDSSTF) are compositionally biased toward polar residues. The span at 755 to 774 (HKSEKPALPRKRAGENRSDQ) shows a compositional bias: basic and acidic residues. A Nuclear localization signal 3 motif is present at residues 762–769 (LPRKRAGE). At threonine 781 the chain carries Phosphothreonine. A compositionally biased stretch (basic and acidic residues) spans 788 to 802 (KKNEEAADEVFKDIM). Phosphothreonine occurs at positions 814, 823, 844, and 852. A Phosphoserine modification is found at serine 855. The DNA-binding stretch occupies residues 869–968 (PAEESRVRRH…VLPATPKPQS (100 aa)). Positions 881 to 891 (SSESPGRDKGK) are enriched in basic and acidic residues. Over residues 905 to 915 (ASAGKAGGKPS) the composition is skewed to low complexity. Serine 917 bears the Phosphoserine mark. An F-actin-binding region spans residues 953-1130 (EGLKKPVLPA…VKEISDIVQR (178 aa)). Polar residues predominate over residues 965–975 (KPQSAKPSGTP). A Phosphoserine modification is found at serine 977. Low complexity predominate over residues 984-993 (TLPSASSALA). The short motif at 1090–1100 (LENNLRELQIC) is the Nuclear export signal element.

It belongs to the protein kinase superfamily. Tyr protein kinase family. ABL subfamily. Interacts with SORBS1 following insulin stimulation. Found in a trimolecular complex containing CDK5 and CABLES1. Interacts with CABLES1 and PSTPIP1. Interacts with ZDHHC16, ITGB1 and HCK. Interacts with STX17; probably phosphorylates STX17. Interacts with INPPL1/SHIP2. Interacts with the 14-3-3 proteins, YWHAB, YWHAE, YWHAG, YWHAH, SFN and YWHAZ; the interaction with 14-3-3 proteins requires phosphorylation on Thr-735 and, sequesters ABL1 into the cytoplasm. Interacts with ABI1, ABI2, BCR, CRK, FGR, FYN, HCK, LYN, PSMA7 RAD9A, RAD51, RAD52, TP73 and WASF3. A complex made of ABL1, CTTN and MYLK regulates cortical actin-based cytoskeletal rearrangement critical to sphingosine 1-phosphate (S1P)-mediated endothelial cell (EC) barrier enhancement. Interacts (via SH3 domain) with CASP9; the interaction is direct and increases in the response of cells to genotoxic stress and ABL1/c-Abl activation. Found in a complex with ABL1, ABL2, CRK and UNC119; leading to the inhibition of CRK phosphorylation by ABL kinases. Interacts with TBX21. Interacts with NEDD9/HEF1; interaction is induced by CXCL12 promotion of ABL-mediated phosphorylation of NEDD9/HEF1. It depends on Mg(2+) as a cofactor. Post-translationally, acetylated at Lys-711 by EP300 which promotes the cytoplasmic translocation. Phosphorylation at Tyr-70 by members of the SRC family of kinases disrupts SH3 domain-based autoinhibitory interactions and intermolecular associations, such as that with ABI1, and also enhances kinase activity. Phosphorylation at Tyr-226 and Tyr-393 correlate with increased activity. DNA damage-induced activation of ABL1 requires the function of ATM and Ser-446 phosphorylation. Phosphorylation at Ser-569 has been attributed to a CDC2-associated kinase and is coupled to cell division. Phosphorylation at Ser-618 and Ser-619 by PAK2 increases binding to CRK and reduces binding to ABI1. Phosphorylation on Thr-735 is required for binding 14-3-3 proteins for cytoplasmic translocation. Phosphorylated by PRKDC. In terms of processing, polyubiquitinated. Polyubiquitination of ABL1 leads to degradation. Widely expressed.

The protein localises to the cytoplasm. It is found in the cytoskeleton. It localises to the nucleus. Its subcellular location is the mitochondrion. The protein resides in the nucleus membrane. It catalyses the reaction L-tyrosyl-[protein] + ATP = O-phospho-L-tyrosyl-[protein] + ADP + H(+). With respect to regulation, stabilized in the inactive form by an association between the SH3 domain and the SH2-TK linker region, interactions of the N-terminal cap, and contributions from an N-terminal myristoyl group and phospholipids. Activated by autophosphorylation as well as by SRC-family kinase-mediated phosphorylation. Activated by RIN1 binding to the SH2 and SH3 domains. Also stimulated by cell death inducers and DNA-damage. Phosphatidylinositol 4,5-bisphosphate (PIP2), a highly abundant phosphoinositide known to regulate cytoskeletal and membrane proteins, also inhibits the tyrosine kinase activity. Activated by 5-(1,3-diaryl-1H-pyrazol-4-yl)hydantoin, 5-[3-(4-fluorophenyl)-1-phenyl-1H-pyrazol-4-yl]-2,4-imidazolidinedione (DPH). Inhibited by ABI1, whose activity is controlled by ABL1 itself through tyrosine phosphorylation. Also inhibited by imatinib mesylate (Gleevec) which is used for the treatment of chronic myeloid leukemia (CML), and by VX-680, an inhibitor that also acts on imatinib-resistant mutants. Non-receptor tyrosine-protein kinase that plays a role in many key processes linked to cell growth and survival such as cytoskeleton remodeling in response to extracellular stimuli, cell motility and adhesion, receptor endocytosis, autophagy, DNA damage response and apoptosis. Coordinates actin remodeling through tyrosine phosphorylation of proteins controlling cytoskeleton dynamics like WASF3 (involved in branch formation); ANXA1 (involved in membrane anchoring); DBN1, DBNL, CTTN, RAPH1 and ENAH (involved in signaling); or MAPT and PXN (microtubule-binding proteins). Phosphorylation of WASF3 is critical for the stimulation of lamellipodia formation and cell migration. Involved in the regulation of cell adhesion and motility through phosphorylation of key regulators of these processes such as BCAR1, CRK, CRKL, DOK1, EFS or NEDD9. Phosphorylates multiple receptor tyrosine kinases and more particularly promotes endocytosis of EGFR, facilitates the formation of neuromuscular synapses through MUSK, inhibits PDGFRB-mediated chemotaxis and modulates the endocytosis of activated B-cell receptor complexes. Other substrates which are involved in endocytosis regulation are the caveolin (CAV1) and RIN1. Moreover, ABL1 regulates the CBL family of ubiquitin ligases that drive receptor down-regulation and actin remodeling. Phosphorylation of CBL leads to increased EGFR stability. Involved in late-stage autophagy by regulating positively the trafficking and function of lysosomal components. ABL1 targets to mitochondria in response to oxidative stress and thereby mediates mitochondrial dysfunction and cell death. In response to oxidative stress, phosphorylates serine/threonine kinase PRKD2 at 'Tyr-717'. ABL1 is also translocated in the nucleus where it has DNA-binding activity and is involved in DNA-damage response and apoptosis. Many substrates are known mediators of DNA repair: DDB1, DDB2, ERCC3, ERCC6, RAD9A, RAD51, RAD52 or WRN. Activates the proapoptotic pathway when the DNA damage is too severe to be repaired. Phosphorylates TP73, a primary regulator for this type of damage-induced apoptosis. Phosphorylates the caspase CASP9 on 'Tyr-153' and regulates its processing in the apoptotic response to DNA damage. Phosphorylates PSMA7 that leads to an inhibition of proteasomal activity and cell cycle transition blocks. ABL1 also acts as a regulator of multiple pathological signaling cascades during infection. Several known tyrosine-phosphorylated microbial proteins have been identified as ABL1 substrates. This is the case of A36R of Vaccinia virus, Tir (translocated intimin receptor) of pathogenic E.coli and possibly Citrobacter, CagA (cytotoxin-associated gene A) of H.pylori, or AnkA (ankyrin repeat-containing protein A) of A.phagocytophilum. Pathogens can highjack ABL1 kinase signaling to reorganize the host actin cytoskeleton for multiple purposes, like facilitating intracellular movement and host cell exit. Finally, functions as its own regulator through autocatalytic activity as well as through phosphorylation of its inhibitor, ABI1. Regulates T-cell differentiation in a TBX21-dependent manner. Positively regulates chemokine-mediated T-cell migration, polarization, and homing to lymph nodes and immune-challenged tissues, potentially via activation of NEDD9/HEF1 and RAP1. Phosphorylates TBX21 on tyrosine residues leading to an enhancement of its transcriptional activator activity. This Homo sapiens (Human) protein is Tyrosine-protein kinase ABL1 (ABL1).